Here is a 367-residue protein sequence, read N- to C-terminus: Quinolinate synthase (367 aa).

Iminosuccinate-binding residues include His64 and Ser82. Cys127 is a [4Fe-4S] cluster binding site. Residues 153-155 (YVN) and Ser170 each bind iminosuccinate. Position 216 (Cys216) interacts with [4Fe-4S] cluster. Iminosuccinate contacts are provided by residues 242-244 (HPE) and Thr259. Position 302 (Cys302) interacts with [4Fe-4S] cluster.

The protein belongs to the quinolinate synthase family. Type 2 subfamily. The cofactor is [4Fe-4S] cluster.

It localises to the cytoplasm. It carries out the reaction iminosuccinate + dihydroxyacetone phosphate = quinolinate + phosphate + 2 H2O + H(+). The protein operates within cofactor biosynthesis; NAD(+) biosynthesis; quinolinate from iminoaspartate: step 1/1. Catalyzes the condensation of iminoaspartate with dihydroxyacetone phosphate to form quinolinate. The polypeptide is Quinolinate synthase (Caulobacter vibrioides (strain ATCC 19089 / CIP 103742 / CB 15) (Caulobacter crescentus)).